The chain runs to 371 residues: Anhydro-N-acetylmuramic acid kinase (371 aa).

Residue 12–20 (GTVLDGNID) coordinates ATP.

The protein belongs to the anhydro-N-acetylmuramic acid kinase family.

The enzyme catalyses 1,6-anhydro-N-acetyl-beta-muramate + ATP + H2O = N-acetyl-D-muramate 6-phosphate + ADP + H(+). It participates in amino-sugar metabolism; 1,6-anhydro-N-acetylmuramate degradation. It functions in the pathway cell wall biogenesis; peptidoglycan recycling. In terms of biological role, catalyzes the specific phosphorylation of 1,6-anhydro-N-acetylmuramic acid (anhMurNAc) with the simultaneous cleavage of the 1,6-anhydro ring, generating MurNAc-6-P. Is required for the utilization of anhMurNAc either imported from the medium or derived from its own cell wall murein, and thus plays a role in cell wall recycling. This is Anhydro-N-acetylmuramic acid kinase from Brucella anthropi (strain ATCC 49188 / DSM 6882 / CCUG 24695 / JCM 21032 / LMG 3331 / NBRC 15819 / NCTC 12168 / Alc 37) (Ochrobactrum anthropi).